The following is a 551-amino-acid chain: Cation/acetate symporter ActP (551 aa).

14 helical membrane-spanning segments follow: residues 5-25 (HWSA…ALTG), 34-54 (IQAI…TYWA), 77-97 (GLAI…SALV), 104-124 (GLIY…LIAE), 150-170 (LSAC…MVGA), 184-204 (VAVV…GMLA), 207-227 (WVQI…AIMV), 263-283 (ISAL…PHIL), 304-324 (GFIG…ILLV), 356-376 (FFLG…VAGL), 406-426 (VSKI…ILFE), 430-450 (IAFM…PIII), 469-489 (LGLS…VTIL), and 498-518 (YEYP…FFSI).

This sequence belongs to the sodium:solute symporter (SSF) (TC 2.A.21) family.

It localises to the cell inner membrane. Functionally, transports acetate. The sequence is that of Cation/acetate symporter ActP from Yersinia pseudotuberculosis serotype IB (strain PB1/+).